The sequence spans 85 residues: Putative membrane protein insertion efficiency factor (85 aa).

The protein belongs to the UPF0161 family.

Its subcellular location is the cell membrane. In terms of biological role, could be involved in insertion of integral membrane proteins into the membrane. This is Putative membrane protein insertion efficiency factor from Buchnera aphidicola subsp. Schizaphis graminum (strain Sg).